Consider the following 327-residue polypeptide: Metal-binding protein YtgA (327 aa).

Residues 1-20 (MDAKMGYIFKVMRWIFCFVA) form the signal peptide. Fe(2+)-binding residues include H73, H139, H205, and D297.

The protein belongs to the bacterial solute-binding protein 9 family. In terms of assembly, monomer.

It is found in the periplasm. In terms of biological role, part of the ATP-binding cassette (ABC) transport system YtgABCD involved in metal import. Binds Fe(2+), Mn(2+) and Ni(2+), with a preference for Fe(2+) and delivers them to the membrane permease for translocation into the cytoplasm. The chain is Metal-binding protein YtgA from Chlamydia pneumoniae (Chlamydophila pneumoniae).